A 53-amino-acid chain; its full sequence is Large ribosomal subunit protein eL24 (53 aa).

C4, C7, C30, and C34 together coordinate Zn(2+). A C4-type zinc finger spans residues 4 to 34; sequence CSFCHEEIEPGTGKMYVKRDGTIYFFCSSKC.

The protein belongs to the eukaryotic ribosomal protein eL24 family. Part of the 50S ribosomal subunit. Forms a cluster with proteins L3 and L14. Requires Zn(2+) as cofactor.

Functionally, binds to the 23S rRNA. The protein is Large ribosomal subunit protein eL24 of Methanothermobacter thermautotrophicus (strain ATCC 29096 / DSM 1053 / JCM 10044 / NBRC 100330 / Delta H) (Methanobacterium thermoautotrophicum).